The primary structure comprises 116 residues: Large ribosomal subunit protein bL19 (116 aa).

The protein belongs to the bacterial ribosomal protein bL19 family.

Functionally, this protein is located at the 30S-50S ribosomal subunit interface and may play a role in the structure and function of the aminoacyl-tRNA binding site. The sequence is that of Large ribosomal subunit protein bL19 from Staphylococcus haemolyticus (strain JCSC1435).